The following is a 242-amino-acid chain: Uridylate kinase (242 aa).

12 to 15 serves as a coordination point for ATP; it reads KLSG. The segment at 20 to 25 is involved in allosteric activation by GTP; it reads GEKGYG. UMP is bound at residue Gly55. Residues Gly56 and Arg60 each coordinate ATP. UMP is bound by residues Asp75 and 136 to 143; that span reads TGNPYFST. Residues Tyr169 and Asp172 each contribute to the ATP site.

The protein belongs to the UMP kinase family. Homohexamer.

It is found in the cytoplasm. The enzyme catalyses UMP + ATP = UDP + ADP. It functions in the pathway pyrimidine metabolism; CTP biosynthesis via de novo pathway; UDP from UMP (UMPK route): step 1/1. With respect to regulation, allosterically activated by GTP. Inhibited by UTP. Its function is as follows. Catalyzes the reversible phosphorylation of UMP to UDP. The chain is Uridylate kinase from Carboxydothermus hydrogenoformans (strain ATCC BAA-161 / DSM 6008 / Z-2901).